The chain runs to 111 residues: Nucleoid-associated protein Fphi_0115 (111 aa).

Positions 1-27 (MNFDMSKLMQQAQKMQEQMKKAQQERE) are disordered. Basic and acidic residues predominate over residues 17-27 (EQMKKAQQERE).

The protein belongs to the YbaB/EbfC family. Homodimer.

It localises to the cytoplasm. The protein resides in the nucleoid. Binds to DNA and alters its conformation. May be involved in regulation of gene expression, nucleoid organization and DNA protection. The polypeptide is Nucleoid-associated protein Fphi_0115 (Francisella philomiragia subsp. philomiragia (strain ATCC 25017 / CCUG 19701 / FSC 153 / O#319-036)).